The sequence spans 214 residues: Nascent polypeptide-associated complex subunit alpha (214 aa).

2 disordered regions span residues 1-57 (MSNP…NEKK) and 119-179 (ASAA…EDKD). Positions 22–38 (AEDEGSDSSDSEGEGEV) are enriched in acidic residues. In terms of domain architecture, NAC-A/B spans 52–117 (SRNEKKARKS…AKIEDLNSQA (66 aa)). Residues 119–128 (ASAAAQLAAQ) are compositionally biased toward low complexity. Residues 129-159 (ESHDHAGHDHSGHDHSHDHGKGKAVDTGDEK) are compositionally biased toward basic and acidic residues. Residues 160–171 (KEEEEDDTEEVD) show a composition bias toward acidic residues. Positions 175–214 (LEDKDIELVMTQASVSRNKAVKALKENDNDIVNSIMALSI) constitute a UBA domain.

This sequence belongs to the NAC-alpha family. In terms of assembly, part of the nascent polypeptide-associated complex (NAC), consisting of EGD2 and EGD1. NAC associates with ribosomes via EGD1.

It is found in the cytoplasm. The protein localises to the nucleus. In terms of biological role, component of the nascent polypeptide-associated complex (NAC), a dynamic component of the ribosomal exit tunnel, protecting the emerging polypeptides from interaction with other cytoplasmic proteins to ensure appropriate nascent protein targeting. The NAC complex also promotes mitochondrial protein import by enhancing productive ribosome interactions with the outer mitochondrial membrane and blocks the inappropriate interaction of ribosomes translating non-secretory nascent polypeptides with translocation sites in the membrane of the endoplasmic reticulum. EGD2 may also be involved in transcription regulation. This chain is Nascent polypeptide-associated complex subunit alpha (egd2), found in Sclerotinia sclerotiorum (strain ATCC 18683 / 1980 / Ss-1) (White mold).